The chain runs to 273 residues: DNA repair protein RecO (273 aa).

The tract at residues 250–273 (NVGQNPSGKDDLNERRDVDGTGES) is disordered. Residues 257 to 273 (GKDDLNERRDVDGTGES) are compositionally biased toward basic and acidic residues.

The protein belongs to the RecO family.

Involved in DNA repair and RecF pathway recombination. The polypeptide is DNA repair protein RecO (Desulfitobacterium hafniense (strain Y51)).